A 423-amino-acid polypeptide reads, in one-letter code: Tumor necrosis factor receptor superfamily member 19 (423 aa).

The N-terminal stretch at 1–29 (MALKVLLEQEKTFFTLLVLLGYLSCKVTC) is a signal peptide. The Extracellular segment spans residues 30 to 170 (ESGDCRQQEF…TASSPRDTAL (141 aa)). TNFR-Cys repeat units lie at residues 33–72 (DCRQ…DAQC), 74–114 (TCRL…DAIC), and 116–149 (DCLP…EPHC). Cystine bridges form between C34-C46, C49-C62, C52-C72, C75-C89, C92-C106, C95-C114, C117-C135, and C138-C149. N-linked (GlcNAc...) asparagine glycosylation occurs at N105. Residues 171 to 191 (AAVICSALATVLLALLILCVI) traverse the membrane as a helical segment. At 192-423 (YCKRQFMEKK…LQVRQRLGSL (232 aa)) the chain is on the cytoplasmic side.

Associates with TRAF1, TRAF2, TRAF3 and TRAF5. Interacts with LINGO1. In terms of tissue distribution, highly expressed in prostate. Detected at lower levels in thymus, spleen, testis, uterus, small intestine, colon and peripheral blood leukocytes.

It localises to the membrane. Functionally, can mediate activation of JNK and NF-kappa-B. May promote caspase-independent cell death. This is Tumor necrosis factor receptor superfamily member 19 (TNFRSF19) from Homo sapiens (Human).